We begin with the raw amino-acid sequence, 264 residues long: Acyl-[acyl-carrier-protein]--UDP-N-acetylglucosamine O-acyltransferase (264 aa).

It belongs to the transferase hexapeptide repeat family. LpxA subfamily. In terms of assembly, homotrimer.

The protein localises to the cytoplasm. The enzyme catalyses a (3R)-hydroxyacyl-[ACP] + UDP-N-acetyl-alpha-D-glucosamine = a UDP-3-O-[(3R)-3-hydroxyacyl]-N-acetyl-alpha-D-glucosamine + holo-[ACP]. It participates in glycolipid biosynthesis; lipid IV(A) biosynthesis; lipid IV(A) from (3R)-3-hydroxytetradecanoyl-[acyl-carrier-protein] and UDP-N-acetyl-alpha-D-glucosamine: step 1/6. Functionally, involved in the biosynthesis of lipid A, a phosphorylated glycolipid that anchors the lipopolysaccharide to the outer membrane of the cell. The chain is Acyl-[acyl-carrier-protein]--UDP-N-acetylglucosamine O-acyltransferase from Actinobacillus pleuropneumoniae serotype 7 (strain AP76).